We begin with the raw amino-acid sequence, 394 residues long: 1-acylglycerol-3-phosphate O-acyltransferase ICT1 (394 aa).

The 308-residue stretch at 74-381 (VLIHGYAASS…AGHNLFLDNP (308 aa)) folds into the AB hydrolase-1 domain. The HXXXXD motif motif lies at 374–379 (HNLFLD).

The protein belongs to the peptidase S33 family. ABHD4/ABHD5 subfamily.

It carries out the reaction a 1-acyl-sn-glycero-3-phosphate + an acyl-CoA = a 1,2-diacyl-sn-glycero-3-phosphate + CoA. In terms of biological role, lysophosphatidic acid acyltransferase involved in membrane remodeling leading to increased organic solvent tolerance. Involved in resistance to azoles and copper. This Saccharomyces cerevisiae (strain ATCC 204508 / S288c) (Baker's yeast) protein is 1-acylglycerol-3-phosphate O-acyltransferase ICT1 (ICT1).